The primary structure comprises 203 residues: Lipoprotein MlpJ (203 aa).

A signal peptide spans 1 to 17 (MKIINILFCISLLLLNS). A lipid anchor (N-palmitoyl cysteine) is attached at Cys18. Cys18 carries the S-diacylglycerol cysteine lipid modification. Residues 26–47 (LKNNAQQTKSRKKRDLSQEELP) are disordered.

Belongs to the Multicopy lipoprotein (Mlp) family.

The protein resides in the cell outer membrane. Functionally, an outer membrane protein that may participate in pathogenesis. Some human Lyme disease patients have antibodies against this protein. The Mlp proteins probably undergo intragenic recombination, generating new alleles. In Borreliella burgdorferi (strain ATCC 35210 / DSM 4680 / CIP 102532 / B31) (Borrelia burgdorferi), this protein is Lipoprotein MlpJ.